Consider the following 396-residue polypeptide: Phosphopentomutase (396 aa).

D14, D286, H291, D327, H328, and H339 together coordinate Mn(2+).

The protein belongs to the phosphopentomutase family. Mn(2+) is required as a cofactor.

The protein localises to the cytoplasm. The catalysed reaction is 2-deoxy-alpha-D-ribose 1-phosphate = 2-deoxy-D-ribose 5-phosphate. The enzyme catalyses alpha-D-ribose 1-phosphate = D-ribose 5-phosphate. Its pathway is carbohydrate degradation; 2-deoxy-D-ribose 1-phosphate degradation; D-glyceraldehyde 3-phosphate and acetaldehyde from 2-deoxy-alpha-D-ribose 1-phosphate: step 1/2. Isomerase that catalyzes the conversion of deoxy-ribose 1-phosphate (dRib-1-P) and ribose 1-phosphate (Rib-1-P) to deoxy-ribose 5-phosphate (dRib-5-P) and ribose 5-phosphate (Rib-5-P), respectively. The protein is Phosphopentomutase of Staphylococcus epidermidis (strain ATCC 35984 / DSM 28319 / BCRC 17069 / CCUG 31568 / BM 3577 / RP62A).